Here is a 459-residue protein sequence, read N- to C-terminus: GTPase Der (459 aa).

2 consecutive EngA-type G domains span residues P4 to A169 and I179 to R355. Residues G10–S17, D57–L61, N120–E123, G185–S192, D232–I236, and N297–D300 each bind GTP. A KH-like domain is found at K356 to S441.

This sequence belongs to the TRAFAC class TrmE-Era-EngA-EngB-Septin-like GTPase superfamily. EngA (Der) GTPase family. Associates with the 50S ribosomal subunit.

In terms of biological role, GTPase that plays an essential role in the late steps of ribosome biogenesis. This Synechococcus sp. (strain JA-3-3Ab) (Cyanobacteria bacterium Yellowstone A-Prime) protein is GTPase Der.